The sequence spans 193 residues: Holliday junction branch migration complex subunit RuvA (193 aa).

Residues 1-64 (MIGRIAGVLL…EDAHLLYGFL (64 aa)) are domain I. The domain II stretch occupies residues 65–139 (TPQERSTFRE…GKLGADLGAM (75 aa)). The flexible linker stretch occupies residues 139–143 (MAGAA). The domain III stretch occupies residues 144-193 (SQSDHASDILNALLALGYSEKEGLAAIKNVPAGTGVSEGIKLALKALSKA).

Belongs to the RuvA family. Homotetramer. Forms an RuvA(8)-RuvB(12)-Holliday junction (HJ) complex. HJ DNA is sandwiched between 2 RuvA tetramers; dsDNA enters through RuvA and exits via RuvB. An RuvB hexamer assembles on each DNA strand where it exits the tetramer. Each RuvB hexamer is contacted by two RuvA subunits (via domain III) on 2 adjacent RuvB subunits; this complex drives branch migration. In the full resolvosome a probable DNA-RuvA(4)-RuvB(12)-RuvC(2) complex forms which resolves the HJ.

The protein resides in the cytoplasm. The RuvA-RuvB-RuvC complex processes Holliday junction (HJ) DNA during genetic recombination and DNA repair, while the RuvA-RuvB complex plays an important role in the rescue of blocked DNA replication forks via replication fork reversal (RFR). RuvA specifically binds to HJ cruciform DNA, conferring on it an open structure. The RuvB hexamer acts as an ATP-dependent pump, pulling dsDNA into and through the RuvAB complex. HJ branch migration allows RuvC to scan DNA until it finds its consensus sequence, where it cleaves and resolves the cruciform DNA. This is Holliday junction branch migration complex subunit RuvA from Paraburkholderia phymatum (strain DSM 17167 / CIP 108236 / LMG 21445 / STM815) (Burkholderia phymatum).